Consider the following 380-residue polypeptide: Dynactin subunit 2 (380 aa).

The tract at residues 1–40 (MADPKFQNLPGIAYDQPDVYETPDDPETDTSDYYEEEPEN) is disordered. Positions 21-40 (ETPDDPETDTSDYYEEEPEN) are enriched in acidic residues. 2 coiled-coil regions span residues 100-135 (VQKC…QSYD) and 353-377 (ETFA…TAIS).

It belongs to the dynactin subunit 2 family. Subunit of dynactin, a multiprotein complex associated with dynein.

It is found in the cytoplasm. Its subcellular location is the cytoskeleton. The protein resides in the membrane. In terms of biological role, modulates cytoplasmic dynein binding to an organelle, and plays a role in prometaphase chromosome alignment and spindle organization during mitosis. May play a role in synapse formation during brain development. The sequence is that of Dynactin subunit 2 from Drosophila pseudoobscura pseudoobscura (Fruit fly).